We begin with the raw amino-acid sequence, 1549 residues long: Zinc finger MYM-type protein 4 (1549 aa).

N-acetylalanine is present on Ala-2. A disordered region spans residues 83 to 108 (VVSSDNEDEQDCSSKDNLVSSVHTDG). A compositionally biased stretch (polar residues) spans 97-106 (KDNLVSSVHT). Residue Thr-106 is modified to Phosphothreonine. A phosphoserine mark is found at Ser-109 and Ser-121. Residues Lys-139 and Lys-148 each participate in a glycyl lysine isopeptide (Lys-Gly) (interchain with G-Cter in SUMO2) cross-link. Residue Ser-161 is modified to Phosphoserine. Residue Lys-195 forms a Glycyl lysine isopeptide (Lys-Gly) (interchain with G-Cter in SUMO2) linkage. Ser-197 carries the phosphoserine modification. Residues Lys-201 and Lys-232 each participate in a glycyl lysine isopeptide (Lys-Gly) (interchain with G-Cter in SUMO2) cross-link. The residue at position 242 (Ser-242) is a Phosphoserine. A Glycyl lysine isopeptide (Lys-Gly) (interchain with G-Cter in SUMO1); alternate cross-link involves residue Lys-250. Lys-250 is covalently cross-linked (Glycyl lysine isopeptide (Lys-Gly) (interchain with G-Cter in SUMO2); alternate). The interval 267-291 (GLLDRVKDEPDNAQEYSHGQQQKTQ) is disordered. Glycyl lysine isopeptide (Lys-Gly) (interchain with G-Cter in SUMO2) cross-links involve residues Lys-273, Lys-289, Lys-327, Lys-400, Lys-428, and Lys-430. Residues 280–290 (QEYSHGQQQKT) show a composition bias toward polar residues. MYM-type zinc fingers lie at residues 362–402 (QLFC…PKDV), 414–457 (KDFC…RHEV), 464–499 (HKLC…GSGQ), 510–544 (KKFC…AEMI), 554–592 (ELFC…QYHL), 600–631 (RNFC…LSQG), 708–742 (FQFC…KETV), 749–788 (KSFC…LIQN), and 795–829 (EDFC…SESL). Glycyl lysine isopeptide (Lys-Gly) (interchain with G-Cter in SUMO2) cross-links involve residues Lys-1035 and Lys-1062. 2 positions are modified to phosphoserine: Ser-1065 and Ser-1072. Glycyl lysine isopeptide (Lys-Gly) (interchain with G-Cter in SUMO2) cross-links involve residues Lys-1081 and Lys-1128. The tract at residues 1124–1185 (DSELKPFSKG…RRGRKKSVVP (62 aa)) is disordered. Residues 1125–1135 (SELKPFSKGET) show a composition bias toward basic and acidic residues. The span at 1161–1182 (SRTRRRHRDGFPQPRRRGRKKS) shows a compositional bias: basic residues. Residues Ser-1182 and Ser-1257 each carry the phosphoserine modification. A Glycyl lysine isopeptide (Lys-Gly) (interchain with G-Cter in SUMO2) cross-link involves residue Lys-1432. Ser-1540, Ser-1543, and Ser-1548 each carry phosphoserine.

Functionally, plays a role in the regulation of cell morphology and cytoskeletal organization. The chain is Zinc finger MYM-type protein 4 (Zmym4) from Mus musculus (Mouse).